The chain runs to 1216 residues: FK506-binding protein 15 (1216 aa).

Methionine 1 carries the N-acetylmethionine modification. 2 positions are modified to phosphoserine: serine 14 and serine 23. A disordered region spans residues 41-68; the sequence is YTAPKQPKKGQGTAAGNQTAPKPAPATT. Positions 59 to 68 are enriched in low complexity; it reads TAPKPAPATT. Residues 71-168 are important for function in growth cone organization; it reads SSVLFATAVH…AVSFNKQVCV (98 aa). At lysine 91 the chain carries N6-acetyllysine. A PPIase FKBP-type domain is found at 196-289; that stretch reads GDSLEVAYTG…VFEVEVRRVK (94 aa). The interval 292–357 is disordered; that stretch reads RDSGSDGHSV…QLTVNSNPDT (66 aa). Positions 303–322 are enriched in low complexity; the sequence is SRDSAAPSPIPASDSLSADP. Serine 306, serine 310, serine 342, serine 344, and serine 617 each carry phosphoserine. The span at 340-356 shows a compositional bias: polar residues; that stretch reads SKSNSLSEQLTVNSNPD. Coiled coils occupy residues 519 to 790 and 820 to 865; these read MAVN…AAAE and QQYR…RLEK. The disordered stretch occupies residues 927-1216; it reads HQEEEEEEEE…DDDDDIGWLG (290 aa). A compositionally biased stretch (acidic residues) spans 929–940; sequence EEEEEEEEEEEE. Serine 948 carries the post-translational modification Phosphoserine. A compositionally biased stretch (pro residues) spans 954–964; that stretch reads PATPGMPPAPP. Over residues 983-994 the composition is skewed to low complexity; that stretch reads TTPLPLQALPTP. Serine 1018 carries the post-translational modification Phosphoserine. A compositionally biased stretch (pro residues) spans 1036 to 1045; it reads TSIPPKPPGP. Phosphoserine is present on residues serine 1050 and serine 1091. Threonine 1093 carries the post-translational modification Phosphothreonine. Phosphoserine is present on residues serine 1108, serine 1153, serine 1157, serine 1159, and serine 1190. Threonine 1198 carries the post-translational modification Phosphothreonine. A compositionally biased stretch (acidic residues) spans 1202 to 1216; it reads GDDDDDDDDDIGWLG.

It belongs to the FKBP-type PPIase family. Interacts with WIP and actin. Interacts with TBC1D23. As to expression, expressed in brain, with highest levels in the granular cell layer of cerebellum and in the granule cell layer of dentate gyrus.

Its subcellular location is the cytoplasm. The protein localises to the cell projection. It localises to the axon. It is found in the early endosome. Involved in the transport of early endosomes at the level of transition between microfilament-based and microtubule-based movement. May be involved in the cytoskeletal organization of neuronal growth cones. Seems to be inactive as a PPIase. The sequence is that of FK506-binding protein 15 (Fkbp15) from Mus musculus (Mouse).